Here is a 691-residue protein sequence, read N- to C-terminus: Threonine--tRNA ligase (691 aa).

The segment at 1-22 is disordered; it reads MSVPAQPAPGADGGDPRQPIRV. In terms of domain architecture, TGS spans 1-73; that stretch reads MSVPAQPAPG…DADAEVTPIA (73 aa). The tract at residues 268–574 is catalytic; that stretch reads DHRKLGVELD…LTEHYAGAFP (307 aa). Zn(2+)-binding residues include cysteine 373, histidine 424, and histidine 551.

This sequence belongs to the class-II aminoacyl-tRNA synthetase family. Homodimer. It depends on Zn(2+) as a cofactor.

The protein resides in the cytoplasm. It catalyses the reaction tRNA(Thr) + L-threonine + ATP = L-threonyl-tRNA(Thr) + AMP + diphosphate + H(+). Catalyzes the attachment of threonine to tRNA(Thr) in a two-step reaction: L-threonine is first activated by ATP to form Thr-AMP and then transferred to the acceptor end of tRNA(Thr). Also edits incorrectly charged L-seryl-tRNA(Thr). This is Threonine--tRNA ligase from Mycobacterium marinum (strain ATCC BAA-535 / M).